A 426-amino-acid polypeptide reads, in one-letter code: MTTIVDKARNDMAVFEEMESAVRSYSRGWPVVFEKAKGYKLWDKNGNEYIDFFAGAGALNYGHNPSEMQKVMIDYIQNDGVIHSLDMATAPRKKFLESFNEIILKPRNMDYKVMFPGPTGTNTVESALKIARKVTGRDTVIGFTNAFHGMTIGSLSVTGNSFKRNGAGIPLNHAISMPFDQYVDEQDSIAYIERFLEDSGSGVALPAAFILETVQGEGGINAARLEWVKKIEEICRKWDILLIIDDVQAGCGRTGTFFSFEEAGINPDIVCLSKSIGGVGLPMAITLIKPEFDQWGPGEHNGTFRGNNLAFLAATEALNNWKTDAFSQNIKKMSSLFQERMKRIVEKFPELNADLRGRGLMLGIGVHVDGLAGEICAEAFSRGLILETSGAKDEVVKFLPPLIIDEDGIEKGMDILEESIQAALEK.

Lys-274 is subject to N6-(pyridoxal phosphate)lysine.

It belongs to the class-III pyridoxal-phosphate-dependent aminotransferase family. Pyridoxal 5'-phosphate is required as a cofactor.

It carries out the reaction L-2,4-diaminobutanoate + 2-oxoglutarate = L-aspartate 4-semialdehyde + L-glutamate. It functions in the pathway amine and polyamine biosynthesis; ectoine biosynthesis; L-ectoine from L-aspartate 4-semialdehyde: step 1/3. Catalyzes reversively the conversion of L-aspartate beta-semialdehyde (ASA) to L-2,4-diaminobutyrate (DABA) by transamination with L-glutamate. The protein is Diaminobutyrate--2-oxoglutarate transaminase (ectB) of Oceanobacillus iheyensis (strain DSM 14371 / CIP 107618 / JCM 11309 / KCTC 3954 / HTE831).